Consider the following 258-residue polypeptide: Pyridoxine 5'-phosphate synthase (258 aa).

Residue Asn16 coordinates 3-amino-2-oxopropyl phosphate. 18 to 19 (DH) contributes to the 1-deoxy-D-xylulose 5-phosphate binding site. A 3-amino-2-oxopropyl phosphate-binding site is contributed by Arg27. His52 acts as the Proton acceptor in catalysis. Positions 54 and 59 each coordinate 1-deoxy-D-xylulose 5-phosphate. The active-site Proton acceptor is the Glu79. Position 109 (Thr109) interacts with 1-deoxy-D-xylulose 5-phosphate. His200 acts as the Proton donor in catalysis. 3-amino-2-oxopropyl phosphate-binding positions include Gly201 and 222-223 (GH).

Belongs to the PNP synthase family. Homooctamer; tetramer of dimers.

The protein resides in the cytoplasm. The catalysed reaction is 3-amino-2-oxopropyl phosphate + 1-deoxy-D-xylulose 5-phosphate = pyridoxine 5'-phosphate + phosphate + 2 H2O + H(+). The protein operates within cofactor biosynthesis; pyridoxine 5'-phosphate biosynthesis; pyridoxine 5'-phosphate from D-erythrose 4-phosphate: step 5/5. Catalyzes the complicated ring closure reaction between the two acyclic compounds 1-deoxy-D-xylulose-5-phosphate (DXP) and 3-amino-2-oxopropyl phosphate (1-amino-acetone-3-phosphate or AAP) to form pyridoxine 5'-phosphate (PNP) and inorganic phosphate. This Burkholderia lata (strain ATCC 17760 / DSM 23089 / LMG 22485 / NCIMB 9086 / R18194 / 383) protein is Pyridoxine 5'-phosphate synthase.